The chain runs to 117 residues: Galanin peptides (117 aa).

Residues 1-19 (MQRCAGFLFLSLILCAALS) form the signal peptide. Positions 20 to 30 (ETFGLVLSAKE) are excised as a propeptide. Position 61 is a threonine amide (Thr-61).

It belongs to the galanin family.

The protein resides in the secreted. In terms of biological role, endocrine hormone of the central and peripheral nervous systems that binds and activates the G protein-coupled receptors GALR1, GALR2, and GALR3. This small neuropeptide may regulate diverse physiologic functions including contraction of smooth muscle of the gastrointestinal and genitourinary tract, growth hormone and insulin release and adrenal secretion. In Coturnix japonica (Japanese quail), this protein is Galanin peptides (GAL).